A 73-amino-acid polypeptide reads, in one-letter code: Sec-independent protein translocase protein TatA (73 aa).

The helical transmembrane segment at 1–21 (MGLSWQQLLILLLVVVVIFGT) threads the bilayer.

It belongs to the TatA/E family. As to quaternary structure, the Tat system comprises two distinct complexes: a TatABC complex, containing multiple copies of TatA, TatB and TatC subunits, and a separate TatA complex, containing only TatA subunits. Substrates initially bind to the TatABC complex, which probably triggers association of the separate TatA complex to form the active translocon.

The protein resides in the cell inner membrane. Functionally, part of the twin-arginine translocation (Tat) system that transports large folded proteins containing a characteristic twin-arginine motif in their signal peptide across membranes. TatA could form the protein-conducting channel of the Tat system. In Histophilus somni (strain 129Pt) (Haemophilus somnus), this protein is Sec-independent protein translocase protein TatA.